Here is a 252-residue protein sequence, read N- to C-terminus: Ribosomal RNA small subunit methyltransferase J (252 aa).

S-adenosyl-L-methionine contacts are provided by residues 105-106 (RD), 121-122 (ER), and aspartate 175.

It belongs to the methyltransferase superfamily. RsmJ family.

It is found in the cytoplasm. It carries out the reaction guanosine(1516) in 16S rRNA + S-adenosyl-L-methionine = N(2)-methylguanosine(1516) in 16S rRNA + S-adenosyl-L-homocysteine + H(+). Its function is as follows. Specifically methylates the guanosine in position 1516 of 16S rRNA. This is Ribosomal RNA small subunit methyltransferase J from Pasteurella multocida (strain Pm70).